The sequence spans 336 residues: MAPLGDGAAAAAAAEPNLVVSFGEMLIDFVPDVAGVSLAESGGFVKAPGGAPANVACAISKLGGSSAFVGKFGDDEFGHMLVDILKKNGVNAEGCLFDEHARTALAFVTLKSNGEREFMFYRNPSADMLLTEAELNLDLIRRAKIFHYGSISLITEPCRSAHVAAMRAAKSAGILCSYDPNVRLPLWPSEDAARAGILSIWKEADFIKVSDDEVAFLTQGDANDEKNVLSLWFDGLKLLIVTDGEKGCRYFTKDFKGSVPGFSVNTVDTTGAGDAFVGSLLVNVAKDDSIFHNEEKLREALKFSNACGAICTTKKGAIPALPTVAVAQELISKAAN.

The protein belongs to the carbohydrate kinase PfkB family. As to expression, expressed in stem, sheaths, anthers, and panicles (at protein level).

The catalysed reaction is D-fructose + ATP = D-fructose 6-phosphate + ADP + H(+). It functions in the pathway glycan biosynthesis; starch biosynthesis. With respect to regulation, strongly inhibited at high fructose concentration. Functionally, may play an important role in maintaining the flux of carbon towards starch formation in endosperm. May also be involved in a sugar-sensing pathway. This chain is Fructokinase-2 (FRK2), found in Oryza sativa subsp. japonica (Rice).